Reading from the N-terminus, the 261-residue chain is MTHQTHAYHMVNPSPWPLTGALSALLMTSGLIMWFHFNSTTLLMLGLTTNMLTMYQWWRDIIRESTFQGHHTPSVQKGLRYGMILFIISEVLFFTGFFWAFYHSSLAPTPELGGCWPPTGIHPLNPLEVPLLNTSVLLASGVSITWAHHSLMEGNRNHMLQALFITIALGVYFTLLQASEYYEAPFTISDGVYGSTFFVATGFHGLHVIIGSTFLIVCFFRQLKFHFTSNHHFGFEAAAWYWHFVDVVWLFLYVSIYWWGS.

Residues 1 to 15 lie on the Mitochondrial matrix side of the membrane; it reads MTHQTHAYHMVNPSP. The helical transmembrane segment at 16–34 threads the bilayer; the sequence is WPLTGALSALLMTSGLIMW. At 35–40 the chain is on the mitochondrial intermembrane side; it reads FHFNST. The helical transmembrane segment at 41–66 threads the bilayer; it reads TLLMLGLTTNMLTMYQWWRDIIREST. Over 67 to 72 the chain is Mitochondrial matrix; sequence FQGHHT. The chain crosses the membrane as a helical span at residues 73–105; that stretch reads PSVQKGLRYGMILFIISEVLFFTGFFWAFYHSS. The Mitochondrial intermembrane portion of the chain corresponds to 106 to 128; sequence LAPTPELGGCWPPTGIHPLNPLE. The helical transmembrane segment at 129–152 threads the bilayer; the sequence is VPLLNTSVLLASGVSITWAHHSLM. Residues 153 to 155 are Mitochondrial matrix-facing; it reads EGN. The helical transmembrane segment at 156 to 183 threads the bilayer; that stretch reads RNHMLQALFITIALGVYFTLLQASEYYE. Over 184–190 the chain is Mitochondrial intermembrane; the sequence is APFTISD. The chain crosses the membrane as a helical span at residues 191–223; it reads GVYGSTFFVATGFHGLHVIIGSTFLIVCFFRQL. Topologically, residues 224–232 are mitochondrial matrix; the sequence is KFHFTSNHH. A helical transmembrane segment spans residues 233 to 256; that stretch reads FGFEAAAWYWHFVDVVWLFLYVSI. The Mitochondrial intermembrane portion of the chain corresponds to 257-261; the sequence is YWWGS.

This sequence belongs to the cytochrome c oxidase subunit 3 family. In terms of assembly, component of the cytochrome c oxidase (complex IV, CIV), a multisubunit enzyme composed of 14 subunits. The complex is composed of a catalytic core of 3 subunits MT-CO1, MT-CO2 and MT-CO3, encoded in the mitochondrial DNA, and 11 supernumerary subunits COX4I, COX5A, COX5B, COX6A, COX6B, COX6C, COX7A, COX7B, COX7C, COX8 and NDUFA4, which are encoded in the nuclear genome. The complex exists as a monomer or a dimer and forms supercomplexes (SCs) in the inner mitochondrial membrane with NADH-ubiquinone oxidoreductase (complex I, CI) and ubiquinol-cytochrome c oxidoreductase (cytochrome b-c1 complex, complex III, CIII), resulting in different assemblies (supercomplex SCI(1)III(2)IV(1) and megacomplex MCI(2)III(2)IV(2)).

Its subcellular location is the mitochondrion inner membrane. The catalysed reaction is 4 Fe(II)-[cytochrome c] + O2 + 8 H(+)(in) = 4 Fe(III)-[cytochrome c] + 2 H2O + 4 H(+)(out). Its function is as follows. Component of the cytochrome c oxidase, the last enzyme in the mitochondrial electron transport chain which drives oxidative phosphorylation. The respiratory chain contains 3 multisubunit complexes succinate dehydrogenase (complex II, CII), ubiquinol-cytochrome c oxidoreductase (cytochrome b-c1 complex, complex III, CIII) and cytochrome c oxidase (complex IV, CIV), that cooperate to transfer electrons derived from NADH and succinate to molecular oxygen, creating an electrochemical gradient over the inner membrane that drives transmembrane transport and the ATP synthase. Cytochrome c oxidase is the component of the respiratory chain that catalyzes the reduction of oxygen to water. Electrons originating from reduced cytochrome c in the intermembrane space (IMS) are transferred via the dinuclear copper A center (CU(A)) of subunit 2 and heme A of subunit 1 to the active site in subunit 1, a binuclear center (BNC) formed by heme A3 and copper B (CU(B)). The BNC reduces molecular oxygen to 2 water molecules using 4 electrons from cytochrome c in the IMS and 4 protons from the mitochondrial matrix. This is Cytochrome c oxidase subunit 3 (MT-CO3) from Pelea capreolus (Gray rhebok).